A 528-amino-acid polypeptide reads, in one-letter code: GMP synthase [glutamine-hydrolyzing] (528 aa).

The Glutamine amidotransferase type-1 domain maps to 13–204; that stretch reads AIVILDFGSQ…VYHICGCEPD (192 aa). The Nucleophile role is filled by Cys-90. Active-site residues include His-178 and Glu-180. Residues 205 to 403 enclose the GMPS ATP-PPase domain; it reads WTTEAFIDEA…LGLPEEIVSR (199 aa). 232-238 is a binding site for ATP; the sequence is SGGVDSS.

Homodimer.

It catalyses the reaction XMP + L-glutamine + ATP + H2O = GMP + L-glutamate + AMP + diphosphate + 2 H(+). Its pathway is purine metabolism; GMP biosynthesis; GMP from XMP (L-Gln route): step 1/1. Functionally, catalyzes the synthesis of GMP from XMP. This Synechococcus sp. (strain CC9311) protein is GMP synthase [glutamine-hydrolyzing].